Here is a 510-residue protein sequence, read N- to C-terminus: Conditioned medium factor receptor 1 (510 aa).

Topologically, residues 1–36 (MDSKYIQKTLSAITEQITKNAAVQKVLDNKFVKEHK) are cytoplasmic. The helical transmembrane segment at 37-55 (YAAAAATVGLGVVAATTIV) threads the bilayer. At 56–510 (KAVNCEGKRY…QGKKQIKKLD (455 aa)) the chain is on the extracellular side.

Its subcellular location is the membrane. Receptor for cmfA, that appears to mediate the G-independent cmfA signal transduction. This Dictyostelium discoideum (Social amoeba) protein is Conditioned medium factor receptor 1 (cmfB).